The following is a 471-amino-acid chain: Trigger factor (471 aa).

In terms of domain architecture, PPIase FKBP-type spans 169–264 (GDVAVVDFKG…LKEIKEKELP (96 aa)). The disordered stretch occupies residues 443-471 (SLASQESEITAPETEAETIEVTAESTTGE). Positions 448–471 (ESEITAPETEAETIEVTAESTTGE) are enriched in low complexity.

Belongs to the FKBP-type PPIase family. Tig subfamily.

The protein localises to the cytoplasm. The catalysed reaction is [protein]-peptidylproline (omega=180) = [protein]-peptidylproline (omega=0). Its function is as follows. Involved in protein export. Acts as a chaperone by maintaining the newly synthesized protein in an open conformation. Functions as a peptidyl-prolyl cis-trans isomerase. The protein is Trigger factor of Trichormus variabilis (strain ATCC 29413 / PCC 7937) (Anabaena variabilis).